Consider the following 893-residue polypeptide: Protein translocase subunit SecA (893 aa).

Residues Gln87, 105-109, and Asp512 each bind ATP; that span reads GEGKT. The segment covering 840–849 has biased composition (basic and acidic residues); that stretch reads VEEQHRKSEE. Positions 840 to 893 are disordered; that stretch reads VEEQHRKSEEVPMDFQHQSASSPSEQAQTPRVGRNEPCPCGSGKKYKQCHGKLA. The segment covering 855–868 has biased composition (polar residues); it reads QHQSASSPSEQAQT. Zn(2+)-binding residues include Cys877, Cys879, Cys888, and His889. Over residues 883-893 the composition is skewed to basic residues; the sequence is KKYKQCHGKLA.

This sequence belongs to the SecA family. In terms of assembly, monomer and homodimer. Part of the essential Sec protein translocation apparatus which comprises SecA, SecYEG and auxiliary proteins SecDF-YajC and YidC. Zn(2+) is required as a cofactor.

The protein localises to the cell inner membrane. Its subcellular location is the cytoplasm. The catalysed reaction is ATP + H2O + cellular proteinSide 1 = ADP + phosphate + cellular proteinSide 2.. Part of the Sec protein translocase complex. Interacts with the SecYEG preprotein conducting channel. Has a central role in coupling the hydrolysis of ATP to the transfer of proteins into and across the cell membrane, serving both as a receptor for the preprotein-SecB complex and as an ATP-driven molecular motor driving the stepwise translocation of polypeptide chains across the membrane. In Colwellia psychrerythraea (strain 34H / ATCC BAA-681) (Vibrio psychroerythus), this protein is Protein translocase subunit SecA.